Here is a 325-residue protein sequence, read N- to C-terminus: NADH-quinone oxidoreductase subunit H (325 aa).

A run of 8 helical transmembrane segments spans residues 11–31 (ILLTVLKAVVILLVVVTCGAF), 81–101 (FIFTIAPVIAFSSLLLSFAIV), 114–134 (IGILFFLMVAGLAVYAVLFAG), 154–174 (VSYEVFLGLSILGVVAQAGSF), 186–206 (MWNIIPQFFGFITFAIAGVAV), 237–257 (FFVGEYIGIVAVSGLIVTLFF), 265–285 (LPSFVWFALKTGFFMMMFILI), and 304–324 (ICLPLTLINLLVTAAVILYNA).

The protein belongs to the complex I subunit 1 family. NDH-1 is composed of 13 different subunits. Subunits NuoA, H, J, K, L, M, N constitute the membrane sector of the complex.

The protein localises to the cell inner membrane. It catalyses the reaction a quinone + NADH + 5 H(+)(in) = a quinol + NAD(+) + 4 H(+)(out). NDH-1 shuttles electrons from NADH, via FMN and iron-sulfur (Fe-S) centers, to quinones in the respiratory chain. The immediate electron acceptor for the enzyme in this species is believed to be ubiquinone. Couples the redox reaction to proton translocation (for every two electrons transferred, four hydrogen ions are translocated across the cytoplasmic membrane), and thus conserves the redox energy in a proton gradient. This subunit may bind ubiquinone. The protein is NADH-quinone oxidoreductase subunit H of Proteus mirabilis (strain HI4320).